The primary structure comprises 362 residues: MAAAEEEPKPKKLKVEAPQALRENILFGMGNPLLDISAVVDKDFLDKYSLKPNDQILAEDKHKELFDELVKKFKVEYHAGGSTQNSIKVAQWMIQQPHKAATFFGCIGIDKFGEILKRKAAEAHVDAHYYEQNEQPTGTCAACITGDNRSLIANLAAANCYKKEKHLDLEKNWMLVEKARVCYIAGFFLTVSPESVLKVAHHASENNRIFTLNLSAPFISQFYKESLMKVMPYVDILFGNETEAATFAREQGFETKDIKEIAKKTQALPKMNSKRQRIVIFTQGRDDTIMATESEVTAFAVLDQDQKEIIDTNGAGDAFVGGFLSQLVSDKPLTECIRAGHYAASIIIRRTGCTFPEKPDFH.

Position 2 is an N-acetylalanine (alanine 2). The Nuclear localization signal signature appears at 8-16; sequence PKPKKLKVE. Aspartate 35 contributes to the adenosine binding site. Serine 49 contributes to the Mg(2+) binding site. Tyrosine 77 carries the post-translational modification Phosphotyrosine. 2 residues coordinate Mg(2+): aspartate 147 and asparagine 148. Glutamine 306 lines the adenosine pocket. Catalysis depends on aspartate 317, which acts as the Proton acceptor.

The protein belongs to the carbohydrate kinase PfkB family. Monomer. The cofactor is Mg(2+). Widely expressed. Highest level in placenta, liver, muscle and kidney.

Its subcellular location is the nucleus. It localises to the cytoplasm. It catalyses the reaction adenosine + ATP = AMP + ADP + H(+). It participates in purine metabolism; AMP biosynthesis via salvage pathway; AMP from adenosine: step 1/1. With respect to regulation, activity is inhibited by 5-iodotubercidin and 5'-amino-5'-deoxyadenosine. Catalyzes the phosphorylation of the purine nucleoside adenosine at the 5' position in an ATP-dependent manner. Serves as a potential regulator of concentrations of extracellular adenosine and intracellular adenine nucleotides. The protein is Adenosine kinase of Homo sapiens (Human).